We begin with the raw amino-acid sequence, 511 residues long: GATA zinc finger domain-containing protein 15 (511 aa).

Positions 1 to 111 (TNNNNFNNIN…FNDNCNNNSN (111 aa)) are enriched in low complexity. Disordered regions lie at residues 1 to 194 (TNNN…NTFF), 214 to 313 (NVNN…NENK), and 325 to 355 (NLQY…VLSP). The segment covering 124-135 (SLQNINQYPLSP) has biased composition (polar residues). A compositionally biased stretch (low complexity) spans 136–166 (NNNKSSNQHLSHSSSNVNSQYYQTPYYQPSQ). A compositionally biased stretch (polar residues) spans 167–185 (KQNSPNSTPPLNGCQYENH). 2 stretches are compositionally biased toward low complexity: residues 214-309 (NVNN…NNDN) and 337-351 (SGST…PTSP). Residues 453 to 478 (CQACGTRASPEWRKGPDGFKSLCNAC) form a GATA-type zinc finger.

The chain is GATA zinc finger domain-containing protein 15 (gtaO) from Dictyostelium discoideum (Social amoeba).